Consider the following 807-residue polypeptide: ATP-binding cassette sub-family F member 1 (807 aa).

Positions 1–227 are disordered; sequence MPKGPKQQPP…KEKAKKAEQM (227 aa). Ser22 is modified (phosphoserine). Over residues 29–39 the composition is skewed to basic residues; the sequence is KKGKKDKKTKK. Over residues 47-65 the composition is skewed to basic and acidic residues; sequence VEDRQAGEEEKVLKEKEQQ. Residues 73 to 85 show a composition bias toward basic residues; that stretch reads QKKKRDTRKGRRK. The residue at position 106 (Ser106) is a Phosphoserine. 2 positions are modified to phosphoserine; by CK2: Ser110 and Ser141. A compositionally biased stretch (basic and acidic residues) spans 148 to 161; it reads EKHPPKPAKPEKNR. Phosphoserine is present on Ser167. Residues 197 to 207 are compositionally biased toward acidic residues; sequence LDDEEEQDEEE. Residues 208–227 are compositionally biased toward basic and acidic residues; sequence IKEKEPPKQGKEKAKKAEQM. Residues 266–510 enclose the ABC transporter 1 domain; it reads IKLEKFSISA…MYQQKQKELL (245 aa). Residue 298-305 participates in ATP binding; the sequence is GPNGKGKT. Positions 521–542 are enriched in basic and acidic residues; sequence KELKAGGKSTKQAEKQTKEALT. The tract at residues 521 to 564 is disordered; the sequence is KELKAGGKSTKQAEKQTKEALTRKQQKCRRKNQDEESQEAPELL. A Phosphoserine modification is found at Ser557. Residues 587 to 802 form the ABC transporter 2 domain; it reads LGLHGVTFGY…VLEALGEVMV (216 aa). 620 to 627 is an ATP binding site; the sequence is GPNGVGKS.

It belongs to the ABC transporter superfamily. ABCF family. EF3 subfamily. Interacts (via N-terminus) with EIF2S1; the interaction is independent of its phosphorylated status. Associates (via both ABC transporter domains) with the ribosomes. In terms of processing, phosphorylated at phosphoserine and phosphothreonine. Phosphorylation on Ser-110 and Ser-141 by CK2; inhibits association of EIF2 with ribosomes.

It is found in the cytoplasm. Its subcellular location is the nucleus. The protein resides in the nucleoplasm. The protein localises to the nucleus envelope. Its function is as follows. Required for efficient Cap- and IRES-mediated mRNA translation initiation. Not involved in the ribosome biogenesis. This is ATP-binding cassette sub-family F member 1 (ABCF1) from Sus scrofa (Pig).